The following is a 402-amino-acid chain: MNYSTENVSSAALRKRKTLKKSINFSIMIIGESGSGRSTLINTLCGGNSIVPTSSTATQDPFTKKLTLRHENVELEDNEGHKISLNIIDTPNFANSINCDDDFKIIVDFIRHQFDEVLLEESRVKRNPRFKDGRIHVLIYMINPTGHGLSDIDVKFLQHVNNLVNIIPIISKADSLTPKELKLNKELILEDLNNYGINFYKFNEYDYEQDYIDEEIIEYNKYLNSLIPFAIIGANEYRSNPNGSEDEDDILKLRILNKDFKPIDIDNAEINDFTILKNVLLVTHLNEFKDITHDSIYENYRTEALSGKQFQYVNKDSAKQEISESDYLMKEEQIKLEEERLRKFEERVHQDLINKRKELLERENELKEIEKRLLAEGLKFDENGDVVKVHEEESSENEVKVI.

Met1 carries the post-translational modification N-acetylmethionine. Ser4 is modified (phosphoserine). Residues 14–21 (RKRKTLKK) carry the Basic motif motif. Residues 21 to 307 (KSINFSIMII…ENYRTEALSG (287 aa)) enclose the Septin-type G domain. The segment at 31 to 38 (GESGSGRS) is G1 motif. 31–38 (GESGSGRS) provides a ligand contact to GTP. The segment at 89–92 (DTPN) is G3 motif. The G4 motif stretch occupies residues 171 to 174 (SKAD). GTP-binding positions include 172–180 (KADSLTPKE) and Gly233. The stretch at 318–376 (AKQEISESDYLMKEEQIKLEEERLRKFEERVHQDLINKRKELLERENELKEIEKRLLAE) forms a coiled coil. Ser394 is subject to Phosphoserine; by CDC28. Ser395 carries the post-translational modification Phosphoserine; by GIN4.

This sequence belongs to the TRAFAC class TrmE-Era-EngA-EngB-Septin-like GTPase superfamily. Septin GTPase family. As to quaternary structure, component of the septin complex which consists of CDC3, CDC10, CDC11, CDC12 and probably SEP7. The purified septin complex appeared to have a stoichiometry of 2 CDC3, 1 to 2 CDC10, 1 CDC11, 2 CDC12, and 1 or none SEP7 subunit. Interacts with HSL1. Hyphal induction causes immediate phosphorylation at Ser-395 by GIN4 and at Ser-394 by CDC28-CCN1. GIN4 phosphorylation at Ser-395 primes CDC11 for further phosphorylation by CDC28-CCN1. CDC28-HGC1 then maintains CDC11 phosphorylation throughout hyphal growth. Ser-4 is also phosphorylated in yeast cells but not hyphal cells. In terms of processing, met-1 is acetylated.

It is found in the bud neck. In terms of biological role, septins are GTPases involved in cytokinesis that assemble early in the cell cycle as a patch at the incipient bud site and form a ring before bud emergence, which transforms into an hour-glass shaped collar of cortical filaments that spans both sides of the mother-bud neck. This collar persists until just before cytokinesis, when it splits into two rings that occupy opposite sides of the neck. The septins at the bud neck serve as a structural scaffold that recruits different components involved in diverse processes at specific stages during the cell cycle. Many proteins bind asymmetrically to the septin collar. The septin assembly is regulated by protein kinase GIN4. Septins are also involved in cell morphogenesis, chlamydospores morphogenesis, bud site selection, chitin deposition, cell cycle regulation, cell compartmentalization, and spore wall formation. CDC11 is required for the correct localization of SEC3 at bud tips and bud necks. Plays a key role in invasive growth and virulence. In Candida albicans (strain SC5314 / ATCC MYA-2876) (Yeast), this protein is Septin CDC11 (CDC11).